Reading from the N-terminus, the 510-residue chain is Probable gamma-aminobutyrate transaminase 3, mitochondrial (510 aa).

Residues 1–41 (MICRSLLLLRSNAASKASSIVKHVAATGCLPEYSSEAPARY) constitute a mitochondrion transit peptide. Pyridoxal 5'-phosphate is bound at residue 166-167 (GS). Tyr199 lines the substrate pocket. Asp306 contributes to the pyridoxal 5'-phosphate binding site. Lys335 contributes to the substrate binding site. Lys335 is modified (N6-(pyridoxal phosphate)lysine).

This sequence belongs to the class-III pyridoxal-phosphate-dependent aminotransferase family.

The protein resides in the mitochondrion. It carries out the reaction 4-aminobutanoate + pyruvate = succinate semialdehyde + L-alanine. The enzyme catalyses 4-aminobutanoate + glyoxylate = succinate semialdehyde + glycine. Functionally, transaminase that degrades gamma-amino butyric acid (GABA). This is Probable gamma-aminobutyrate transaminase 3, mitochondrial from Oryza sativa subsp. indica (Rice).